A 64-amino-acid polypeptide reads, in one-letter code: Translation machinery-associated protein 7 homolog (64 aa).

Residues 1–64 are disordered; sequence MSGRQGGKAK…GGGIKKSGKK (64 aa). Residues 21-50 adopt a coiled-coil conformation; the sequence is DLSEEDVEFKKKQQEEAKKIKEMAAKAGQR. The segment covering 28-44 has biased composition (basic and acidic residues); the sequence is EFKKKQQEEAKKIKEMA. Positions 53–64 are enriched in gly residues; the sequence is LLGGGIKKSGKK.

It belongs to the TMA7 family.

The sequence is that of Translation machinery-associated protein 7 homolog from Caenorhabditis briggsae.